A 307-amino-acid polypeptide reads, in one-letter code: 4-hydroxybenzoate geranyltransferase 1 (307 aa).

A run of 8 helical transmembrane segments spans residues proline 38–leucine 58, proline 62–isoleucine 82, leucine 120–valine 140, isoleucine 154–serine 174, glycine 179–valine 199, methionine 230–leucine 250, isoleucine 252–phenylalanine 272, and phenylalanine 286–phenylalanine 306.

This sequence belongs to the UbiA prenyltransferase family. Requires Mg(2+) as cofactor. Expressed only in roots.

Its subcellular location is the endoplasmic reticulum membrane. The catalysed reaction is 4-hydroxybenzoate + (2E)-geranyl diphosphate = 3-geranyl-4-hydroxybenzoate + diphosphate. Prenyltransferase involved in the biosynthesis of shikonin, a naphthoquinone secondary metabolite. Could accept only geranyl diphosphate and not dimethylallyl diphosphate, farnesyl diphosphate, or geranylgeranyl diphosphate as substrate. The chain is 4-hydroxybenzoate geranyltransferase 1 (PGT-1) from Lithospermum erythrorhizon (Purple gromwell).